A 143-amino-acid polypeptide reads, in one-letter code: MLSHPMKLLFFVFALSALLAAATPVVEVRDYQQFSRVSLINFISFNKARGGDLCANGKKTMCCGELKTFDKNILGLLDGLLTTVVGLAGEILKPTGLVGLECVPITLLGNGGLSDVCKANGVCCKDLTLRAAINVGCVPINIL.

A signal peptide spans 1-22 (MLSHPMKLLFFVFALSALLAAA). Disulfide bonds link Cys54-Cys123, Cys62-Cys117, Cys63-Cys102, and Cys124-Cys137.

Belongs to the fungal hydrophobin family. As to quaternary structure, self-assembles to form functional amyloid fibrils called rodlets. Self-assembly into fibrillar rodlets occurs spontaneously at hydrophobic:hydrophilic interfaces and the rodlets further associate laterally to form amphipathic monolayers.

Its subcellular location is the secreted. The protein localises to the cell wall. Aerial growth, conidiation, and dispersal of filamentous fungi in the environment rely upon a capability of their secreting small amphipathic proteins called hydrophobins (HPBs) with low sequence identity. Class I can self-assemble into an outermost layer of rodlet bundles on aerial cell surfaces, conferring cellular hydrophobicity that supports fungal growth, development and dispersal; whereas Class II form highly ordered films at water-air interfaces through intermolecular interactions but contribute nothing to the rodlet structure. Hydph20 is a class I hydrophobin involved in mycelial growth. The sequence is that of Class I hydrophobin 20 from Pleurotus ostreatus (strain PC15) (Oyster mushroom).